The following is a 208-amino-acid chain: MQKTELDDQKLVEEIARRIREILELLGENPEREGLKETPERVAKALLEMTSGLRTPPPQIKVFSLGEDGEAYEKNQIVLIKDVNFSSLCEHHMLPIIGKIHVAYIVSNSGKVAGFSKIIRIVNYYSSRLQIQERLVEQIADAIMNSEIKPKGVMVIGNAIHMCSYVRGVKDKEAKLVSVAYRGLFKTNRALQNHVFRLLDNANKVNLL.

Zn(2+) contacts are provided by Cys-89, His-92, and Cys-163.

It belongs to the GTP cyclohydrolase I family. Homomer.

It carries out the reaction GTP + H2O = 7,8-dihydroneopterin 3'-triphosphate + formate + H(+). The protein operates within cofactor biosynthesis; 7,8-dihydroneopterin triphosphate biosynthesis; 7,8-dihydroneopterin triphosphate from GTP: step 1/1. The protein is GTP cyclohydrolase 1 of Saccharolobus islandicus (strain Y.N.15.51 / Yellowstone #2) (Sulfolobus islandicus).